The chain runs to 434 residues: Glutamate-1-semialdehyde 2,1-aminomutase 1 (434 aa).

Lysine 270 bears the N6-(pyridoxal phosphate)lysine mark.

Belongs to the class-III pyridoxal-phosphate-dependent aminotransferase family. HemL subfamily. Homodimer. The cofactor is pyridoxal 5'-phosphate.

It localises to the cytoplasm. The enzyme catalyses (S)-4-amino-5-oxopentanoate = 5-aminolevulinate. It functions in the pathway porphyrin-containing compound metabolism; protoporphyrin-IX biosynthesis; 5-aminolevulinate from L-glutamyl-tRNA(Glu): step 2/2. This Bacillus thuringiensis (strain Al Hakam) protein is Glutamate-1-semialdehyde 2,1-aminomutase 1.